A 212-amino-acid polypeptide reads, in one-letter code: Nuclear transcription factor Y subunit C-7 (212 aa).

The segment covering 1 to 10 (MEENNGNNNH) has biased composition (polar residues). Disordered stretches follow at residues 1–23 (MEENNGNNNHYLPQPSSSQLPPP) and 190–212 (EWPAVPGDGEEAAGEIGGSSGGN).

Belongs to the NFYC/HAP5 subunit family. In terms of assembly, heterotrimeric transcription factor composed of three components, NF-YA, NF-YB and NF-YC. NF-YB and NF-YC must interact and dimerize for NF-YA association and DNA binding. In terms of tissue distribution, expressed in flowers.

It is found in the nucleus. Stimulates the transcription of various genes by recognizing and binding to a CCAAT motif in promoters. This is Nuclear transcription factor Y subunit C-7 (NFYC7) from Arabidopsis thaliana (Mouse-ear cress).